Consider the following 312-residue polypeptide: Olfactory receptor-like protein COR5 (312 aa).

Residues 1-26 (MALGNCTTPTTFILSGLTDNPRLQMP) are Extracellular-facing. Asn-5 carries N-linked (GlcNAc...) asparagine glycosylation. Residues 27-49 (LFMVFLAIYTITLLANLGLIALI) traverse the membrane as a helical segment. Residues 50-57 (SVDFHLQT) lie on the Cytoplasmic side of the membrane. The chain crosses the membrane as a helical span at residues 58–79 (PMYIFLQNLSFTDAAYSTVITP). Residues 80–100 (KMLATFLEERRTISYVGCILQ) lie on the Extracellular side of the membrane. Cysteines 97 and 179 form a disulfide. Residues 101 to 120 (YFSFVLLTSSECLLLAVMAY) traverse the membrane as a helical segment. The Cytoplasmic segment spans residues 121 to 139 (DRYVAICKPLLYPAIMTKA). The helical transmembrane segment at 140 to 164 (VCWRLVEGLYSLAFLNSLVHTSGLL) threads the bilayer. Residues 165 to 205 (KLSFCSSNVVNHFFCDNSPLFQISSSSTTLNELLVFIFGSW) are Extracellular-facing. The helical transmembrane segment at 206–226 (FAMSSIITTPISYVFIILTVV) threads the bilayer. The Cytoplasmic portion of the chain corresponds to 227–239 (RIRSKDGKYKAFS). A helical transmembrane segment spans residues 240–260 (TCTSHLMAVSLFHGTVIFMYL). Residues 261 to 271 (RPVKLFSLDTD) lie on the Extracellular side of the membrane. A helical transmembrane segment spans residues 272-292 (KIASLFYTVVIPMLNPLIYSW). Residues 293 to 312 (RNKEVKDALRRVIATNVWIH) are Cytoplasmic-facing.

Belongs to the G-protein coupled receptor 1 family.

Its subcellular location is the cell membrane. In terms of biological role, odorant receptor. This Gallus gallus (Chicken) protein is Olfactory receptor-like protein COR5 (COR5).